A 380-amino-acid chain; its full sequence is O-phospho-L-seryl-tRNA:Cys-tRNA synthase (380 aa).

Residues 86–87 (AR), Asn-192, and 215–217 (SGH) contribute to the pyridoxal 5'-phosphate site. Lys-218 carries the N6-(pyridoxal phosphate)lysine modification.

The protein belongs to the SepCysS family. Homodimer. Interacts with SepRS. Pyridoxal 5'-phosphate serves as cofactor.

The catalysed reaction is O-phospho-L-seryl-tRNA(Cys) + hydrogen sulfide + H(+) = L-cysteinyl-tRNA(Cys) + phosphate. Functionally, converts O-phospho-L-seryl-tRNA(Cys) (Sep-tRNA(Cys)) to L-cysteinyl-tRNA(Cys) (Cys-tRNA(Cys)). This is O-phospho-L-seryl-tRNA:Cys-tRNA synthase from Methanococcus maripaludis (strain C7 / ATCC BAA-1331).